The sequence spans 195 residues: Probable GTP-binding protein EngB (195 aa).

The 172-residue stretch at 24–195 (DWPEIALAGR…EAWTAILKYL (172 aa)) folds into the EngB-type G domain. Residues 32–39 (GRSNVGKS), 59–63 (GKTQL), 77–80 (DVPG), 144–147 (TKAD), and 176–178 (FSS) contribute to the GTP site. Mg(2+) is bound by residues serine 39 and threonine 61.

It belongs to the TRAFAC class TrmE-Era-EngA-EngB-Septin-like GTPase superfamily. EngB GTPase family. It depends on Mg(2+) as a cofactor.

In terms of biological role, necessary for normal cell division and for the maintenance of normal septation. This is Probable GTP-binding protein EngB from Lactococcus lactis subsp. cremoris (strain MG1363).